The sequence spans 1430 residues: Nephrocystin-4 (1430 aa).

Residues Met824–Glu1430 form a sufficient for basal bodies localization region. A disordered region spans residues Asn828 to Arg857.

The protein belongs to the NPHP4 family.

Its subcellular location is the cytoplasm. The protein resides in the cytoskeleton. The protein localises to the cilium basal body. Functionally, involved in the organization of apical junctions. Required for building functional cilia. Involved in the organization of the subapical actin network in multiciliated epithelial cells. Seems to recruit int to basal bodies of motile cilia which subsequently interacts with actin-modifying proteins such as daam1. May down-regulate the canonical Wnt pathway and promote the Wnt-PCP pathway. Acts as a negative regulator of the hippo pathway. In Xenopus laevis (African clawed frog), this protein is Nephrocystin-4 (nphp4).